The following is a 131-amino-acid chain: Phosphoribosyl-AMP cyclohydrolase (131 aa).

Residue Asp-74 participates in Mg(2+) binding. Zn(2+) is bound at residue Cys-75. Residues Asp-76 and Asp-78 each contribute to the Mg(2+) site. Zn(2+) is bound by residues Cys-91 and Cys-98.

It belongs to the PRA-CH family. Homodimer. It depends on Mg(2+) as a cofactor. The cofactor is Zn(2+).

The protein localises to the cytoplasm. It catalyses the reaction 1-(5-phospho-beta-D-ribosyl)-5'-AMP + H2O = 1-(5-phospho-beta-D-ribosyl)-5-[(5-phospho-beta-D-ribosylamino)methylideneamino]imidazole-4-carboxamide. It participates in amino-acid biosynthesis; L-histidine biosynthesis; L-histidine from 5-phospho-alpha-D-ribose 1-diphosphate: step 3/9. Its function is as follows. Catalyzes the hydrolysis of the adenine ring of phosphoribosyl-AMP. This is Phosphoribosyl-AMP cyclohydrolase from Bradyrhizobium sp. (strain BTAi1 / ATCC BAA-1182).